The primary structure comprises 371 residues: Leu/Ile/Val-binding protein homolog 1 (371 aa).

Residues 1 to 23 (MRKTLFSGVALAAVIAFGGSAWA) form the signal peptide.

The protein belongs to the leucine-binding protein family.

In terms of biological role, component of an amino-acid transport system. The protein is Leu/Ile/Val-binding protein homolog 1 of Brucella abortus (strain 2308).